The sequence spans 486 residues: N-succinylglutamate 5-semialdehyde dehydrogenase (486 aa).

220–225 (GSSRTG) provides a ligand contact to NAD(+). Residues Glu243 and Cys277 contribute to the active site.

The protein belongs to the aldehyde dehydrogenase family. AstD subfamily.

The catalysed reaction is N-succinyl-L-glutamate 5-semialdehyde + NAD(+) + H2O = N-succinyl-L-glutamate + NADH + 2 H(+). Its pathway is amino-acid degradation; L-arginine degradation via AST pathway; L-glutamate and succinate from L-arginine: step 4/5. Catalyzes the NAD-dependent reduction of succinylglutamate semialdehyde into succinylglutamate. The sequence is that of N-succinylglutamate 5-semialdehyde dehydrogenase from Shewanella sp. (strain W3-18-1).